Here is a 485-residue protein sequence, read N- to C-terminus: Aerolysin-5 (485 aa).

An N-terminal signal peptide occupies residues 1 to 23; sequence MQKLKITGLSLIISGLLMAQRHA. Intrachain disulfides connect C42–C98 and C182–C187. The interaction with host N-linked glycan stretch occupies residues 68 to 84; sequence WQISGLANGWVIMGPVY. The tract at residues 256 to 288 is part of the transmembrane beta-barrel after proteolytic activation of the toxin and insertion into the host membrane; it reads YGLSEKVTTKNKFKWPLVGETELSIEIAANQSW. The segment at 346–355 is interaction with glycans from host GPI-anchor; that stretch reads RWGGNAWYTH. Positions 446–485 are excised as a propeptide; that stretch reads AADGKAPRALSARRGEQGLRLAIPLECRKSSPGLASATSA.

Belongs to the aerolysin family. Homodimer in solution; homoheptamer in the host membrane. After binding to GPI-anchored proteins in target membranes and proteolytic removal of the C-terminal propeptide, the protein assembles into a heptameric pre-pore complex. A further conformation change leads to insertion into the host membrane. Post-translationally, proteolytic cleavage and subsequent release of the propeptide trigger a major conformation change, leading to the formation of a heptameric pre-pore that then inserts into the host membrane.

It localises to the secreted. The protein localises to the host cell membrane. Functionally, secreted, cytolytic toxin that forms pores in host membranes after proteolytic removal of a C-terminal propeptide, leading to destruction of the membrane permeability barrier and cell death. The pores are formed by transmembrane beta-strands and are approximately 3 nm in diameter. The sequence is that of Aerolysin-5 (ahh5) from Aeromonas hydrophila.